Reading from the N-terminus, the 463-residue chain is Eukaryotic translation initiation factor 3 subunit E (463 aa).

Residues 224 to 407 form the PCI domain; the sequence is FNLGENQGCQ…NMLHITRPHA (184 aa). Residues 432 to 463 are disordered; it reads QSSVGEPRERGERGERGNKGGRGRPRTQEVAA. Positions 437–449 are enriched in basic and acidic residues; sequence EPRERGERGERGN.

Belongs to the eIF-3 subunit E family. In terms of assembly, component of the eukaryotic translation initiation factor 3 (eIF-3) complex.

Its subcellular location is the cytoplasm. In terms of biological role, component of the eukaryotic translation initiation factor 3 (eIF-3) complex, which is involved in protein synthesis of a specialized repertoire of mRNAs and, together with other initiation factors, stimulates binding of mRNA and methionyl-tRNAi to the 40S ribosome. The eIF-3 complex specifically targets and initiates translation of a subset of mRNAs involved in cell proliferation. The sequence is that of Eukaryotic translation initiation factor 3 subunit E from Cryptococcus neoformans var. neoformans serotype D (strain JEC21 / ATCC MYA-565) (Filobasidiella neoformans).